Reading from the N-terminus, the 166-residue chain is Urease accessory protein UreE (166 aa).

Belongs to the UreE family.

The protein localises to the cytoplasm. Its function is as follows. Involved in urease metallocenter assembly. Binds nickel. Probably functions as a nickel donor during metallocenter assembly. The protein is Urease accessory protein UreE of Pseudomonas fluorescens (strain Pf0-1).